A 91-amino-acid chain; its full sequence is HssA/B-like protein 24 (91 aa).

The protein belongs to the hssA/B family.

The chain is HssA/B-like protein 24 (hssl24) from Dictyostelium discoideum (Social amoeba).